We begin with the raw amino-acid sequence, 367 residues long: tRNA-dihydrouridine(20a/20b) synthase [NAD(P)+] (367 aa).

FMN is bound by residues 45–47 and glutamine 99; that span reads PMV. The active-site Proton donor is the cysteine 128. FMN contacts are provided by residues lysine 169, histidine 197, 231–233, and 255–256; these read NGD and VR.

Belongs to the Dus family. Dus4 subfamily. Requires FMN as cofactor.

It catalyses the reaction 5,6-dihydrouridine(20a) in tRNA + NADP(+) = uridine(20a) in tRNA + NADPH + H(+). It carries out the reaction 5,6-dihydrouridine(20a) in tRNA + NAD(+) = uridine(20a) in tRNA + NADH + H(+). The catalysed reaction is 5,6-dihydrouridine(20b) in tRNA + NAD(+) = uridine(20b) in tRNA + NADH + H(+). The enzyme catalyses 5,6-dihydrouridine(20b) in tRNA + NADP(+) = uridine(20b) in tRNA + NADPH + H(+). It catalyses the reaction a 5,6-dihydrouridine in mRNA + NAD(+) = a uridine in mRNA + NADH + H(+). It carries out the reaction a 5,6-dihydrouridine in mRNA + NADP(+) = a uridine in mRNA + NADPH + H(+). Catalyzes the synthesis of dihydrouridine, a modified base found in the D-loop of most tRNAs. Specifically modifies U20a and U20b in cytoplasmic tRNAs. Also able to mediate dihydrouridylation of some mRNAs, thereby affecting their translation. In Saccharomyces cerevisiae (strain ATCC 204508 / S288c) (Baker's yeast), this protein is tRNA-dihydrouridine(20a/20b) synthase [NAD(P)+].